A 158-amino-acid polypeptide reads, in one-letter code: Small ribosomal subunit protein uS9 (158 aa).

The protein belongs to the universal ribosomal protein uS9 family.

The polypeptide is Small ribosomal subunit protein uS9 (Rhodopseudomonas palustris (strain BisA53)).